We begin with the raw amino-acid sequence, 57 residues long: Large ribosomal subunit protein bL32 (57 aa).

A compositionally biased stretch (basic residues) spans 1-20 (MAVPKKKTSKAKRDQRRATW). The segment at 1–24 (MAVPKKKTSKAKRDQRRATWRRQA) is disordered.

This sequence belongs to the bacterial ribosomal protein bL32 family.

The chain is Large ribosomal subunit protein bL32 from Gloeothece citriformis (strain PCC 7424) (Cyanothece sp. (strain PCC 7424)).